Reading from the N-terminus, the 359-residue chain is Protein-arginine kinase (359 aa).

Residues 25 to 257 (IVISSRVRLA…QQVIEQERML (233 aa)) form the Phosphagen kinase C-terminal domain. ATP-binding positions include 28–32 (SSRVR), His93, Arg128, 179–183 (RASLM), and 210–215 (RGIYGE). Residues 340-345 (RDAKRA) carry the RDXXRA motif of the pArg binding pocket involved in allosteric regulation motif.

The protein belongs to the ATP:guanido phosphotransferase family.

It carries out the reaction L-arginyl-[protein] + ATP = N(omega)-phospho-L-arginyl-[protein] + ADP + H(+). With respect to regulation, appears to be allosterically activated by the binding of pArg-containing polypeptides to the pArg-binding pocket localized in the C-terminal domain of McsB. In terms of biological role, catalyzes the specific phosphorylation of arginine residues in proteins. This Syntrophomonas wolfei subsp. wolfei (strain DSM 2245B / Goettingen) protein is Protein-arginine kinase.